Here is a 135-residue protein sequence, read N- to C-terminus: Probable transporter PD_1892 (135 aa).

4 helical membrane-spanning segments follow: residues 4 to 24 (YWYP…LLLL), 45 to 65 (AQNI…TVIF), 71 to 91 (VTVA…GLGT), and 114 to 134 (IVAT…MGVY).

It belongs to the TsuA/YedE (TC 9.B.102) family.

The protein resides in the cell inner membrane. The protein is Probable transporter PD_1892 of Xylella fastidiosa (strain Temecula1 / ATCC 700964).